The sequence spans 432 residues: Adenosylhomocysteinase (432 aa).

Ser2 is subject to N-acetylserine. Residues Thr57, Asp131, and Glu156 each coordinate substrate. Position 183 is a phosphoserine (Ser183). Positions 183 to 350 are NAD binding; it reads SVTKSKFDNL…EGRLVNLGCA (168 aa). Residues Lys186 and Asp190 each contribute to the substrate site. Residue Lys186 is modified to N6-(2-hydroxyisobutyryl)lysine. Tyr193 is modified (phosphotyrosine).

It belongs to the adenosylhomocysteinase family. Homotetramer. Interaction with AHCYL1. NAD(+) is required as a cofactor.

It is found in the cytoplasm. Its subcellular location is the melanosome. The protein resides in the nucleus. It localises to the endoplasmic reticulum. The enzyme catalyses S-adenosyl-L-homocysteine + H2O = L-homocysteine + adenosine. It participates in amino-acid biosynthesis; L-homocysteine biosynthesis; L-homocysteine from S-adenosyl-L-homocysteine: step 1/1. Functionally, catalyzes the hydrolysis of S-adenosyl-L-homocysteine to form adenosine and homocysteine. Binds copper ions. This Bos taurus (Bovine) protein is Adenosylhomocysteinase (AHCY).